A 577-amino-acid chain; its full sequence is Proline--tRNA ligase (577 aa).

The protein belongs to the class-II aminoacyl-tRNA synthetase family. ProS type 1 subfamily. As to quaternary structure, homodimer.

The protein resides in the cytoplasm. It carries out the reaction tRNA(Pro) + L-proline + ATP = L-prolyl-tRNA(Pro) + AMP + diphosphate. In terms of biological role, catalyzes the attachment of proline to tRNA(Pro) in a two-step reaction: proline is first activated by ATP to form Pro-AMP and then transferred to the acceptor end of tRNA(Pro). As ProRS can inadvertently accommodate and process non-cognate amino acids such as alanine and cysteine, to avoid such errors it has two additional distinct editing activities against alanine. One activity is designated as 'pretransfer' editing and involves the tRNA(Pro)-independent hydrolysis of activated Ala-AMP. The other activity is designated 'posttransfer' editing and involves deacylation of mischarged Ala-tRNA(Pro). The misacylated Cys-tRNA(Pro) is not edited by ProRS. This chain is Proline--tRNA ligase, found in Chlamydia abortus (strain DSM 27085 / S26/3) (Chlamydophila abortus).